A 302-amino-acid polypeptide reads, in one-letter code: Arginase (302 aa).

Mn(2+)-binding residues include His103, Asp126, His128, and Asp130. Substrate-binding positions include His128 to Asn132, Ser139 to Asn141, and Asp180. Positions 229 and 231 each coordinate Mn(2+). Substrate is bound by residues Thr243 and Glu274.

Belongs to the arginase family. Mn(2+) is required as a cofactor.

The catalysed reaction is L-arginine + H2O = urea + L-ornithine. Its pathway is nitrogen metabolism; urea cycle; L-ornithine and urea from L-arginine: step 1/1. In Staphylococcus aureus (strain MSSA476), this protein is Arginase (arg).